Consider the following 2138-residue polypeptide: Non-reducing polyketide synthase rads2 (2138 aa).

Residues 11-249 are N-terminal acylcarrier protein transacylase (SAT) domain; sequence LIFGDQTDSW…NPLNIHALQH (239 aa). The 432-residue stretch at 373–804 folds into the Ketosynthase family 3 (KS3) domain; it reads SGRIAIVGMA…GGNACMLLED (432 aa). Active-site for beta-ketoacyl synthase activity residues include cysteine 549, histidine 684, and histidine 724. Residues 901–1184 are malonyl-CoA:ACP transacylase (MAT) domain; that stretch reads VFVFGGQGSH…KGVCTSFVRA (284 aa). Serine 992 (for acyl/malonyl transferase activity) is an active-site residue. Residues 1291–1437 form an N-terminal hotdog fold region; that stretch reads AQYVVQESPS…KDVQRLQADW (147 aa). Residues 1291-1610 enclose the PKS/mFAS DH domain; sequence AQYVVQESPS…FHEISNATLK (320 aa). Residues 1303–1607 are product template (PT) domain; it reads KKIQVTFRAS…GLEFHEISNA (305 aa). Positions 1459-1610 are C-terminal hotdog fold; sequence HGHRFQPDIF…FHEISNATLK (152 aa). Positions 1618–1666 are disordered; it reads SKSVLKPDNAAPLKAPEKKEDATPTAPKKSADPGKEEEEEGDTATPAAV. The Carrier domain occupies 1666–1740; it reads VGEFEVIIQT…DLRRAFAMAP (75 aa). Position 1700 is an O-(pantetheine 4'-phosphoryl)serine (serine 1700). Low complexity predominate over residues 1740–1771; it reads PSSSSSTSASESVSESLDDSSSTSRSATPSSS. 2 disordered regions span residues 1740 to 1781 and 1807 to 1828; these read PSSS…GFVE and QATKVQPQAPAATAADNDSSPA. The thioesterase (TE) domain stretch occupies residues 1860–2006; it reads ADGTGSIATY…TRRHLGAMFS (147 aa).

It participates in secondary metabolite biosynthesis. Non-reducing polyketide synthase; part of the gene cluster that mediates the biosynthesis of radicicol, a resorcylic acid lactone (RAL) that irreversibly inhibits the HSP90 molecular chaperone, an important target for cancer chemotherapy. The cluster encodes only two apparent post-PKS enzymes, a cytochrome P450 monooxygenase (radP) and a non-heme halogenase (radH) that introduce the epoxide and the chlorine, respectively. If this cluster includes all the genes required for radicicol biosynthesis, the remaining structural features of radicicol are presumably generated by the PKSs rads1 and rads2. The C-2' ketone could arise if the R-PKS rads1 and NR-PKS rads2 each carry out four iterations, in contrast to the five iteration-three iteration split for the hypothemycin PKSs. The origin of the cis 5',6' double bond is not known. The radicicol R-PKS rads1 ER domain may catalyze either double bond isomerization or reduction in the third iteration. This is Non-reducing polyketide synthase rads2 from Floropilus chiversii (Chaetomium chiversii).